The following is a 99-amino-acid chain: High mobility group protein I (99 aa).

A disordered region spans residues 1 to 99; sequence MSDSPVKKGR…ADTEEVNSSD (99 aa). Serine 4 is subject to Phosphoserine; by CDC2 and MAPK. The a.T hook 1 DNA-binding region spans 7–19; sequence KKGRGRPAKAKPE. Over residues 16–46 the composition is skewed to basic and acidic residues; the sequence is AKPEETASPKAAKKEEKKVEEVPKKIEESTK. At serine 23 the chain carries Phosphoserine; by MAPK. The segment at residues 54–66 is a DNA-binding region (a.T hook 2); the sequence is KKGRGRPSKGDKA. Residue serine 73 is modified to Phosphoserine; by PKC. Residues 74 to 86 constitute a DNA-binding region (a.T hook 3); sequence GKGRGRPAKNAKK. Residues 90–99 show a composition bias toward acidic residues; the sequence is ADTEEVNSSD.

The protein belongs to the HMGA family. Phosphorylated in a cell-cycle dependent manner; substantially reduced in cells that have finished proliferating and are differentiated. Phosphorylation at Ser-4 and Ser-23 results in a 10-fold weakening of DNA-binding activity and altered the mode of protein-DNA interaction.

The protein resides in the nucleus. It localises to the nucleolus. The protein localises to the chromosome. Functionally, binds preferentially to the minor groove of A+T rich regions in double-stranded DNA via the second and third DBA-binding domains. It is suggested that these proteins could function in nucleosome phasing and in the 3'-end processing of mRNA transcripts. They are also involved in the transcription regulation of genes containing, or in close proximity to A+T-rich regions. This Chironomus tentans (Midge) protein is High mobility group protein I.